A 315-amino-acid polypeptide reads, in one-letter code: Acetaldehyde dehydrogenase 2 (315 aa).

NAD(+) is bound at residue 15–18; it reads SGNI. Cys135 acts as the Acyl-thioester intermediate in catalysis. Residues 166–174 and Asn293 contribute to the NAD(+) site; that span reads SAGPGTRAN.

This sequence belongs to the acetaldehyde dehydrogenase family.

It carries out the reaction acetaldehyde + NAD(+) + CoA = acetyl-CoA + NADH + H(+). This is Acetaldehyde dehydrogenase 2 from Paraburkholderia phymatum (strain DSM 17167 / CIP 108236 / LMG 21445 / STM815) (Burkholderia phymatum).